Consider the following 470-residue polypeptide: Glutamate--tRNA ligase (470 aa).

Positions 12-22 (PSPTGIFHVGG) match the 'HIGH' region motif. Residues C103, C105, C125, and D127 each coordinate Zn(2+). A 'KMSKS' region motif is present at residues 236 to 240 (KLSKR). K239 is an ATP binding site.

Belongs to the class-I aminoacyl-tRNA synthetase family. Glutamate--tRNA ligase type 1 subfamily. Monomer. Zn(2+) is required as a cofactor.

The protein resides in the cytoplasm. The catalysed reaction is tRNA(Glu) + L-glutamate + ATP = L-glutamyl-tRNA(Glu) + AMP + diphosphate. In terms of biological role, catalyzes the attachment of glutamate to tRNA(Glu) in a two-step reaction: glutamate is first activated by ATP to form Glu-AMP and then transferred to the acceptor end of tRNA(Glu). The protein is Glutamate--tRNA ligase of Frankia alni (strain DSM 45986 / CECT 9034 / ACN14a).